Consider the following 186-residue polypeptide: D-glycero-beta-D-manno-heptose-1,7-bisphosphate 7-phosphatase (186 aa).

The active-site Nucleophile is aspartate 9. Mg(2+)-binding residues include aspartate 9 and aspartate 11. Residues 9 to 11 (DRD), 17 to 20 (DHGY), and 51 to 54 (TNQS) each bind substrate. Aspartate 11 (proton donor) is an active-site residue. Positions 90, 92, 105, and 107 each coordinate Zn(2+). Position 108 to 109 (108 to 109 (RK)) interacts with substrate. The Mg(2+) site is built by aspartate 134 and lysine 135. Lysine 135 serves as a coordination point for substrate.

The protein belongs to the GmhB family. In terms of assembly, monomer. Requires Mg(2+) as cofactor. The cofactor is Zn(2+).

It is found in the cytoplasm. The catalysed reaction is D-glycero-beta-D-manno-heptose 1,7-bisphosphate + H2O = D-glycero-beta-D-manno-heptose 1-phosphate + phosphate. It functions in the pathway nucleotide-sugar biosynthesis; ADP-L-glycero-beta-D-manno-heptose biosynthesis; ADP-L-glycero-beta-D-manno-heptose from D-glycero-beta-D-manno-heptose 7-phosphate: step 2/4. Its pathway is bacterial outer membrane biogenesis; LPS core biosynthesis. Functionally, converts the D-glycero-beta-D-manno-heptose 1,7-bisphosphate intermediate into D-glycero-beta-D-manno-heptose 1-phosphate by removing the phosphate group at the C-7 position in vitro. Also catalyzes the dephosphorylation of D-glycero-alpha-D-manno-heptose-1,7-bisphosphate in vitro. In Vibrio cholerae serotype O1 (strain ATCC 39315 / El Tor Inaba N16961), this protein is D-glycero-beta-D-manno-heptose-1,7-bisphosphate 7-phosphatase (gmhB).